The sequence spans 411 residues: uncharacterized protein (411 aa).

A signal peptide spans 1–21; it reads MHSRILLLLLMFAFNVGLINC. One can recognise an EGF-like domain in the interval 28 to 67; it reads PQSNCKIRCENGGMCVFDLERPDFHSCICLLGVYTGDRCQ. Intrachain disulfides connect C32-C42, C36-C54, and C56-C66. The span at 78–97 shows a compositional bias: polar residues; it reads TATSDETSHPMNIQHQQSQA. 2 disordered regions span residues 78-312 and 337-375; these read TATS…EPIR and HPIEEDEYWDETSKKTDEDSWTAENEGTKKTEEADEYGM. Residues 100–230 show a composition bias toward basic and acidic residues; the sequence is DDARRRDDER…VEKELNDKRT (131 aa). Positions 237–266 are enriched in acidic residues; sequence FEYEGGDEEYPQVAEKEDEYDEGYETDNTE. Residues 267-276 show a composition bias toward low complexity; sequence DVTITTTKTT.

This is an uncharacterized protein from Caenorhabditis elegans.